The following is a 204-amino-acid chain: FMN-dependent NADH:quinone oxidoreductase 2 (204 aa).

FMN-binding positions include serine 10 and 16–18 (SIS).

It belongs to the azoreductase type 1 family. Homodimer. The cofactor is FMN.

It catalyses the reaction 2 a quinone + NADH + H(+) = 2 a 1,4-benzosemiquinone + NAD(+). The catalysed reaction is N,N-dimethyl-1,4-phenylenediamine + anthranilate + 2 NAD(+) = 2-(4-dimethylaminophenyl)diazenylbenzoate + 2 NADH + 2 H(+). Quinone reductase that provides resistance to thiol-specific stress caused by electrophilic quinones. Functionally, also exhibits azoreductase activity. Catalyzes the reductive cleavage of the azo bond in aromatic azo compounds to the corresponding amines. The polypeptide is FMN-dependent NADH:quinone oxidoreductase 2 (Jannaschia sp. (strain CCS1)).